Consider the following 148-residue polypeptide: Large ribosomal subunit protein bL9 (148 aa).

Belongs to the bacterial ribosomal protein bL9 family.

Functionally, binds to the 23S rRNA. The chain is Large ribosomal subunit protein bL9 from Pelotomaculum thermopropionicum (strain DSM 13744 / JCM 10971 / SI).